A 356-amino-acid polypeptide reads, in one-letter code: AT-hook motif nuclear-localized protein 1 (356 aa).

The tract at residues 1–127 (MVLNMESTGE…PSHLPPPSSH (127 aa)) is disordered. Positions 49–66 (VTPPPPQPSSHHTAPPPL) are enriched in pro residues. Positions 88–97 (MKKKRGRPRK) are enriched in basic residues. The short motif at 89 to 97 (KKKRGRPRK) is the Bipartite nuclear localization signal element. Residues 89–101 (KKKRGRPRKYGPD) constitute a DNA-binding region (a.T hook). Low complexity predominate over residues 106-118 (ALSPKPISSAPAP). In terms of domain architecture, PPC spans 167–309 (GGNFTPHIIT…KHDFMLSSPT (143 aa)). The segment at 270-287 (GLLVAASPVQVVVGSFLA) is required for nuclear localization. The Nuclear localization signal motif lies at 295–302 (KPKKNKHD).

The protein resides in the nucleus. Its subcellular location is the nucleoplasm. It localises to the chromosome. Functionally, transcription factor that specifically binds AT-rich DNA sequences related to the nuclear matrix attachment regions (MARs). May play a function in the positioning of chromatin fibers within the nucleus. The chain is AT-hook motif nuclear-localized protein 1 from Arabidopsis thaliana (Mouse-ear cress).